The following is a 76-amino-acid chain: Kappa-actitoxin-Avd4l (76 aa).

An N-terminal signal peptide occupies residues 1-19; that stretch reads MNKALFLCLVVLCAAVVFA. Positions 20–31 are excised as a propeptide; it reads AEDLQKAKHAPF. Cystine bridges form between cysteine 37/cysteine 72, cysteine 39/cysteine 65, and cysteine 55/cysteine 73.

It belongs to the sea anemone type 3 (BDS) potassium channel toxin family. As to expression, weakly expressed in the ectodermal tissue from the distal and proximal tentacles, body wall, and oral disk.

It localises to the secreted. The protein resides in the nematocyst. Functionally, blocks Kv3 voltage-gated potassium channels. Reduces blood pressure. The polypeptide is Kappa-actitoxin-Avd4l (Anemonia viridis (Snakelocks anemone)).